An 86-amino-acid polypeptide reads, in one-letter code: Ferredoxin-like protein YgcO (86 aa).

Positions 45-74 constitute a 4Fe-4S ferredoxin-type domain; it reads GNLRIDYRSCLECGTCRLLCDESTLQQWRY.

It belongs to the bacterial-type ferredoxin family. FixX subfamily.

Its function is as follows. Could be a 3Fe-4S cluster-containing protein. Probably participates in a redox process with YgcN, YgcQ and YgcR. This Escherichia coli (strain K12) protein is Ferredoxin-like protein YgcO (ygcO).